Here is a 104-residue protein sequence, read N- to C-terminus: UPF0235 protein Paes_1868 (104 aa).

Belongs to the UPF0235 family.

The chain is UPF0235 protein Paes_1868 from Prosthecochloris aestuarii (strain DSM 271 / SK 413).